A 227-amino-acid polypeptide reads, in one-letter code: ATP synthase F(0) complex subunit a (227 aa).

The next 6 membrane-spanning stretches (helical) occupy residues 14–34 (LFGI…FPAP), 69–89 (WGPY…LGLL), 98–118 (QLSV…IIGL), 132–152 (EGTP…SLFI), 180–200 (FVLL…LFLL), and 202–222 (LLEV…LSLY).

Belongs to the ATPase A chain family. As to quaternary structure, component of the ATP synthase complex composed at least of ATP5F1A/subunit alpha, ATP5F1B/subunit beta, ATP5MC1/subunit c (homooctomer), MT-ATP6/subunit a, MT-ATP8/subunit 8, ATP5ME/subunit e, ATP5MF/subunit f, ATP5MG/subunit g, ATP5MK/subunit k, ATP5MJ/subunit j, ATP5F1C/subunit gamma, ATP5F1D/subunit delta, ATP5F1E/subunit epsilon, ATP5PF/subunit F6, ATP5PB/subunit b, ATP5PD/subunit d, ATP5PO/subunit OSCP. ATP synthase complex consists of a soluble F(1) head domain (subunits alpha(3) and beta(3)) - the catalytic core - and a membrane F(0) domain - the membrane proton channel (subunits c, a, 8, e, f, g, k and j). These two domains are linked by a central stalk (subunits gamma, delta, and epsilon) rotating inside the F1 region and a stationary peripheral stalk (subunits F6, b, d, and OSCP). Interacts with DNAJC30; interaction is direct.

The protein localises to the mitochondrion inner membrane. The enzyme catalyses H(+)(in) = H(+)(out). Its function is as follows. Subunit a, of the mitochondrial membrane ATP synthase complex (F(1)F(0) ATP synthase or Complex V) that produces ATP from ADP in the presence of a proton gradient across the membrane which is generated by electron transport complexes of the respiratory chain. ATP synthase complex consist of a soluble F(1) head domain - the catalytic core - and a membrane F(1) domain - the membrane proton channel. These two domains are linked by a central stalk rotating inside the F(1) region and a stationary peripheral stalk. During catalysis, ATP synthesis in the catalytic domain of F(1) is coupled via a rotary mechanism of the central stalk subunits to proton translocation. With the subunit c (ATP5MC1), forms the proton-conducting channel in the F(0) domain, that contains two crucial half-channels (inlet and outlet) that facilitate proton movement from the mitochondrial intermembrane space (IMS) into the matrix. Protons are taken up via the inlet half-channel and released through the outlet half-channel, following a Grotthuss mechanism. This chain is ATP synthase F(0) complex subunit a, found in Tetraodon nigroviridis (Spotted green pufferfish).